A 445-amino-acid chain; its full sequence is Ribosomal protein uS12 methylthiotransferase RimO (445 aa).

Residues 6–121 (KKVAVVTLGC…ILETLEEAEK (116 aa)) form the MTTase N-terminal domain. Positions 15, 50, 84, 159, 163, and 166 each coordinate [4Fe-4S] cluster. Positions 145–375 (LSPKQYAYVK…MELQHDIAYE (231 aa)) constitute a Radical SAM core domain. Residues 378–445 (QRWVGQTLKV…SYDLMGEVVQ (68 aa)) enclose the TRAM domain.

It belongs to the methylthiotransferase family. RimO subfamily. [4Fe-4S] cluster is required as a cofactor.

The protein resides in the cytoplasm. The catalysed reaction is L-aspartate(89)-[ribosomal protein uS12]-hydrogen + (sulfur carrier)-SH + AH2 + 2 S-adenosyl-L-methionine = 3-methylsulfanyl-L-aspartate(89)-[ribosomal protein uS12]-hydrogen + (sulfur carrier)-H + 5'-deoxyadenosine + L-methionine + A + S-adenosyl-L-homocysteine + 2 H(+). In terms of biological role, catalyzes the methylthiolation of an aspartic acid residue of ribosomal protein uS12. The protein is Ribosomal protein uS12 methylthiotransferase RimO of Desulfitobacterium hafniense (strain Y51).